The primary structure comprises 265 residues: Mlc titration factor A (265 aa).

Zn(2+)-binding residues include His111, His148, His152, and Glu211.

The protein belongs to the MtfA family. In terms of assembly, interacts with Mlc with high affinity. The cofactor is Zn(2+).

It localises to the cytoplasm. Proteolytic activity is stimulated by interaction with Mlc. Addition of the chelators EDTA or phenanthroline significantly reduces the peptidase activity, whereas the addition of other protease inhibitors has much less effect. Its function is as follows. Involved in the modulation of the activity of the glucose-phosphotransferase system (glucose-PTS). Interacts with the transcriptional repressor Mlc, preventing its interaction with DNA and leading to the modulation of expression of genes regulated by Mlc, including ptsG, which encodes the PTS system glucose-specific EIICB component. In terms of biological role, shows zinc-dependent metallopeptidase activity. In vitro, can cleave several artificial substrates. The greatest activity and specificity is observed for L-alanine fused to 4-nitroanilide (L-alanine-pNA). Shows significantly lower activity towards L-arginine-pNA, L-proline-pNA, hippuryl-L-phenylalanine and hippuryl-L-arginine, and cannot use FTC-casein. Mlc does not appear to be a biologically relevant peptidase substrate. Biologically relevant targets may have a function in growth transition under changing environmental conditions. The protein is Mlc titration factor A of Escherichia coli (strain K12).